The sequence spans 515 residues: 2,3-bisphosphoglycerate-independent phosphoglycerate mutase (515 aa).

Mn(2+) is bound by residues aspartate 17 and serine 67. Serine 67 acts as the Phosphoserine intermediate in catalysis. Substrate contacts are provided by residues histidine 128, 157 to 158, arginine 190, arginine 196, 262 to 265, and lysine 336; these read RD and RADR. Residues aspartate 403, histidine 407, aspartate 444, histidine 445, and histidine 463 each contribute to the Mn(2+) site.

Belongs to the BPG-independent phosphoglycerate mutase family. In terms of assembly, monomer. The cofactor is Mn(2+).

The catalysed reaction is (2R)-2-phosphoglycerate = (2R)-3-phosphoglycerate. It participates in carbohydrate degradation; glycolysis; pyruvate from D-glyceraldehyde 3-phosphate: step 3/5. In terms of biological role, catalyzes the interconversion of 2-phosphoglycerate and 3-phosphoglycerate. This is 2,3-bisphosphoglycerate-independent phosphoglycerate mutase from Acinetobacter baylyi (strain ATCC 33305 / BD413 / ADP1).